The following is a 449-amino-acid chain: 23S rRNA (uracil(1939)-C(5))-methyltransferase RlmD (449 aa).

The region spanning 12-70 (SKQLSAKQSFSVHQLDHLGAGIAQHQGKVVFIPGALPSETVQAQLTEQKKNYARAKLIK) is the TRAM domain. Residues Cys-83, Cys-89, Cys-92, and Cys-170 each contribute to the [4Fe-4S] cluster site. S-adenosyl-L-methionine-binding residues include Gln-282, Phe-311, Asn-316, Glu-332, Asp-359, and Asp-379. Catalysis depends on Cys-405, which acts as the Nucleophile.

Belongs to the class I-like SAM-binding methyltransferase superfamily. RNA M5U methyltransferase family. RlmD subfamily.

It catalyses the reaction uridine(1939) in 23S rRNA + S-adenosyl-L-methionine = 5-methyluridine(1939) in 23S rRNA + S-adenosyl-L-homocysteine + H(+). Its function is as follows. Catalyzes the formation of 5-methyl-uridine at position 1939 (m5U1939) in 23S rRNA. This Shewanella sp. (strain MR-7) protein is 23S rRNA (uracil(1939)-C(5))-methyltransferase RlmD.